A 395-amino-acid polypeptide reads, in one-letter code: Elongation factor Tu (395 aa).

The tr-type G domain maps to 10–204; that stretch reads KSHVNIGTIG…AVDEYIPTPE (195 aa). Residues 19–26 form a G1 region; that stretch reads GHVDHGKT. 19–26 contacts GTP; it reads GHVDHGKT. Thr26 contacts Mg(2+). The G2 stretch occupies residues 60–64; sequence GITIN. Residues 81–84 are G3; sequence DCPG. Residues 81–85 and 136–139 contribute to the GTP site; these read DCPGH and NKMD. A G4 region spans residues 136-139; the sequence is NKMD. Residues 174 to 176 are G5; it reads SAL.

This sequence belongs to the TRAFAC class translation factor GTPase superfamily. Classic translation factor GTPase family. EF-Tu/EF-1A subfamily. As to quaternary structure, monomer.

It localises to the cytoplasm. The catalysed reaction is GTP + H2O = GDP + phosphate + H(+). GTP hydrolase that promotes the GTP-dependent binding of aminoacyl-tRNA to the A-site of ribosomes during protein biosynthesis. This chain is Elongation factor Tu, found in Enterococcus faecalis (strain ATCC 700802 / V583).